The following is a 518-amino-acid chain: Bifunctional purine biosynthesis protein PurH (518 aa).

The region spanning 1-146 (MGRMALLSTS…KNHAHVTVLV (146 aa)) is the MGS-like domain.

It belongs to the PurH family.

It carries out the reaction (6R)-10-formyltetrahydrofolate + 5-amino-1-(5-phospho-beta-D-ribosyl)imidazole-4-carboxamide = 5-formamido-1-(5-phospho-D-ribosyl)imidazole-4-carboxamide + (6S)-5,6,7,8-tetrahydrofolate. It catalyses the reaction IMP + H2O = 5-formamido-1-(5-phospho-D-ribosyl)imidazole-4-carboxamide. Its pathway is purine metabolism; IMP biosynthesis via de novo pathway; 5-formamido-1-(5-phospho-D-ribosyl)imidazole-4-carboxamide from 5-amino-1-(5-phospho-D-ribosyl)imidazole-4-carboxamide (10-formyl THF route): step 1/1. It participates in purine metabolism; IMP biosynthesis via de novo pathway; IMP from 5-formamido-1-(5-phospho-D-ribosyl)imidazole-4-carboxamide: step 1/1. The protein is Bifunctional purine biosynthesis protein PurH of Thermosynechococcus vestitus (strain NIES-2133 / IAM M-273 / BP-1).